The primary structure comprises 458 residues: UDP-N-acetylmuramate--L-alanine ligase (458 aa).

An ATP-binding site is contributed by 118-124 (GTHGKTT).

The protein belongs to the MurCDEF family.

It localises to the cytoplasm. It carries out the reaction UDP-N-acetyl-alpha-D-muramate + L-alanine + ATP = UDP-N-acetyl-alpha-D-muramoyl-L-alanine + ADP + phosphate + H(+). It participates in cell wall biogenesis; peptidoglycan biosynthesis. Functionally, cell wall formation. This is UDP-N-acetylmuramate--L-alanine ligase from Clostridium botulinum (strain Langeland / NCTC 10281 / Type F).